The sequence spans 490 residues: Ketol-acid reductoisomerase (NADP(+)) (490 aa).

A KARI N-terminal Rossmann domain is found at 18-208; it reads AKCRFMDSSE…GGHKAGVLMS (191 aa). NADP(+)-binding positions include 45 to 48, Arg68, Arg76, Ser78, and 108 to 110; these read CGAQ and DKQ. His132 is an active-site residue. Gly158 is an NADP(+) binding site. KARI C-terminal knotted domains are found at residues 209–344 and 345–486; these read SFIA…KTPA and GDVE…MADM. Positions 217, 221, 389, and 393 each coordinate Mg(2+). Residue Ser414 coordinates substrate.

This sequence belongs to the ketol-acid reductoisomerase family. Requires Mg(2+) as cofactor.

It carries out the reaction (2R)-2,3-dihydroxy-3-methylbutanoate + NADP(+) = (2S)-2-acetolactate + NADPH + H(+). The enzyme catalyses (2R,3R)-2,3-dihydroxy-3-methylpentanoate + NADP(+) = (S)-2-ethyl-2-hydroxy-3-oxobutanoate + NADPH + H(+). It functions in the pathway amino-acid biosynthesis; L-isoleucine biosynthesis; L-isoleucine from 2-oxobutanoate: step 2/4. It participates in amino-acid biosynthesis; L-valine biosynthesis; L-valine from pyruvate: step 2/4. Involved in the biosynthesis of branched-chain amino acids (BCAA). Catalyzes an alkyl-migration followed by a ketol-acid reduction of (S)-2-acetolactate (S2AL) to yield (R)-2,3-dihydroxy-isovalerate. In the isomerase reaction, S2AL is rearranged via a Mg-dependent methyl migration to produce 3-hydroxy-3-methyl-2-ketobutyrate (HMKB). In the reductase reaction, this 2-ketoacid undergoes a metal-dependent reduction by NADPH to yield (R)-2,3-dihydroxy-isovalerate. This Marinomonas sp. (strain MWYL1) protein is Ketol-acid reductoisomerase (NADP(+)).